We begin with the raw amino-acid sequence, 587 residues long: L-ornithine N(5)-monooxygenase (587 aa).

FAD contacts are provided by residues 53–61 and Gln-72; that span reads EKHTSFQWH. Lys-77 provides a ligand contact to substrate. 235 to 238 is an NADP(+) binding site; it reads GGQS. Residues 282–285 and Asn-312 each bind substrate; that span reads NEVF. 312–314 lines the NADP(+) pocket; the sequence is NYS. The segment at 488-511 is disordered; the sequence is DNSAASGVSGASTPLTSPSEEEGK. Over residues 491–505 the composition is skewed to polar residues; it reads AASGVSGASTPLTSP. FAD is bound at residue 567–569; sequence TLL. Ser-570 provides a ligand contact to substrate.

Belongs to the lysine N(6)-hydroxylase/L-ornithine N(5)-oxygenase family. In terms of assembly, homotetramer. FAD serves as cofactor.

The catalysed reaction is L-ornithine + NADPH + O2 = N(5)-hydroxy-L-ornithine + NADP(+) + H2O. It catalyses the reaction L-ornithine + NADH + O2 = N(5)-hydroxy-L-ornithine + NAD(+) + H2O. The protein operates within siderophore biosynthesis; ferrichrome biosynthesis. In terms of biological role, L-ornithine N(5)-monooxygenase; part of the siderophore biosynthetic pathway. Omphalotus olearius produces ferrichrome A, but no other siderophore has been detected. Ferrichrome A consists of a hexapeptide ring made up of one glycine, two serine, and three N(5)-hydroxyornithine amino acid residues, the latter acylated by trans-(alpha-methyl)-glutaconic acid residues. The biosynthesis of ferrichrome A depends on the hydroxylation of ornithine to N(5)-hydroxyornithine, catalyzed by the monooxygenase omo1. The second step, the acylation of N(5)-hydroxy-L-ornithine is probably catalyzed by the N-acyltransferase ato1. Finally, assembly of ferrichrome A is catalyzed by the nonribosomal peptide synthase (NRPS) fso1. This is L-ornithine N(5)-monooxygenase from Omphalotus olearius (Jack o'lantern).